We begin with the raw amino-acid sequence, 866 residues long: FHIP family protein v1g243165 (866 aa).

2 disordered regions span residues 739 to 761 (RDGP…ASTS) and 781 to 814 (GSTA…ESQT). A compositionally biased stretch (low complexity) spans 751–761 (SIGSIGSASTS).

It belongs to the FHIP family.

The chain is FHIP family protein v1g243165 from Nematostella vectensis (Starlet sea anemone).